The sequence spans 164 residues: 2S seed storage protein 1 (164 aa).

The signal sequence occupies residues 1–21 (MANKLFLVCAALALCFLLTNA). Propeptides lie at residues 22 to 37 (SIYR…DATN), 74 to 83 (EFDFEDDMEN), and 163 to 164 (FY).

This sequence belongs to the 2S seed storage albumins family. As to quaternary structure, the mature protein consists of a small and a large chain linked by disulfide bonds.

This is a 2S seed storage protein. This chain is 2S seed storage protein 1 (AT2S1), found in Arabidopsis thaliana (Mouse-ear cress).